Consider the following 483-residue polypeptide: Siroheme synthase (483 aa).

The interval 1-203 (MNYFPIFANL…RQNTLAEREL (203 aa)) is precorrin-2 dehydrogenase /sirohydrochlorin ferrochelatase. NAD(+)-binding positions include 22 to 23 (AV) and 43 to 44 (KH). A Phosphoserine modification is found at serine 128. The interval 217-483 (GSVSLVGAGP…GGLNAGQRAA (267 aa)) is uroporphyrinogen-III C-methyltransferase. Proline 226 lines the S-adenosyl-L-methionine pocket. The Proton acceptor role is filled by aspartate 249. Catalysis depends on lysine 271, which acts as the Proton donor. Residues 302–304 (GGD), valine 307, 332–333 (TA), methionine 384, and glycine 413 contribute to the S-adenosyl-L-methionine site.

In the N-terminal section; belongs to the precorrin-2 dehydrogenase / sirohydrochlorin ferrochelatase family. The protein in the C-terminal section; belongs to the precorrin methyltransferase family.

The catalysed reaction is uroporphyrinogen III + 2 S-adenosyl-L-methionine = precorrin-2 + 2 S-adenosyl-L-homocysteine + H(+). It catalyses the reaction precorrin-2 + NAD(+) = sirohydrochlorin + NADH + 2 H(+). It carries out the reaction siroheme + 2 H(+) = sirohydrochlorin + Fe(2+). It functions in the pathway cofactor biosynthesis; adenosylcobalamin biosynthesis; precorrin-2 from uroporphyrinogen III: step 1/1. It participates in cofactor biosynthesis; adenosylcobalamin biosynthesis; sirohydrochlorin from precorrin-2: step 1/1. The protein operates within porphyrin-containing compound metabolism; siroheme biosynthesis; precorrin-2 from uroporphyrinogen III: step 1/1. Its pathway is porphyrin-containing compound metabolism; siroheme biosynthesis; siroheme from sirohydrochlorin: step 1/1. It functions in the pathway porphyrin-containing compound metabolism; siroheme biosynthesis; sirohydrochlorin from precorrin-2: step 1/1. Multifunctional enzyme that catalyzes the SAM-dependent methylations of uroporphyrinogen III at position C-2 and C-7 to form precorrin-2 via precorrin-1. Then it catalyzes the NAD-dependent ring dehydrogenation of precorrin-2 to yield sirohydrochlorin. Finally, it catalyzes the ferrochelation of sirohydrochlorin to yield siroheme. This is Siroheme synthase from Neisseria meningitidis serogroup B (strain ATCC BAA-335 / MC58).